Reading from the N-terminus, the 447-residue chain is Na(+)-translocating NADH-quinone reductase subunit A (447 aa).

The protein belongs to the NqrA family. Composed of six subunits; NqrA, NqrB, NqrC, NqrD, NqrE and NqrF.

It carries out the reaction a ubiquinone + n Na(+)(in) + NADH + H(+) = a ubiquinol + n Na(+)(out) + NAD(+). Its function is as follows. NQR complex catalyzes the reduction of ubiquinone-1 to ubiquinol by two successive reactions, coupled with the transport of Na(+) ions from the cytoplasm to the periplasm. NqrA to NqrE are probably involved in the second step, the conversion of ubisemiquinone to ubiquinol. The sequence is that of Na(+)-translocating NADH-quinone reductase subunit A from Klebsiella pneumoniae subsp. pneumoniae (strain ATCC 700721 / MGH 78578).